Here is a 212-residue protein sequence, read N- to C-terminus: Imidazole glycerol phosphate synthase subunit HisH (212 aa).

One can recognise a Glutamine amidotransferase type-1 domain in the interval 3-212 (SIAVVDYGMG…LLSNFLKWTP (210 aa)). Cys82 functions as the Nucleophile in the catalytic mechanism. Residues His192 and Glu194 contribute to the active site.

Heterodimer of HisH and HisF.

The protein resides in the cytoplasm. The enzyme catalyses 5-[(5-phospho-1-deoxy-D-ribulos-1-ylimino)methylamino]-1-(5-phospho-beta-D-ribosyl)imidazole-4-carboxamide + L-glutamine = D-erythro-1-(imidazol-4-yl)glycerol 3-phosphate + 5-amino-1-(5-phospho-beta-D-ribosyl)imidazole-4-carboxamide + L-glutamate + H(+). It catalyses the reaction L-glutamine + H2O = L-glutamate + NH4(+). The protein operates within amino-acid biosynthesis; L-histidine biosynthesis; L-histidine from 5-phospho-alpha-D-ribose 1-diphosphate: step 5/9. Its function is as follows. IGPS catalyzes the conversion of PRFAR and glutamine to IGP, AICAR and glutamate. The HisH subunit catalyzes the hydrolysis of glutamine to glutamate and ammonia as part of the synthesis of IGP and AICAR. The resulting ammonia molecule is channeled to the active site of HisF. This Nitrosomonas europaea (strain ATCC 19718 / CIP 103999 / KCTC 2705 / NBRC 14298) protein is Imidazole glycerol phosphate synthase subunit HisH.